The chain runs to 133 residues: MTVINTLSNALSSLYNNEMRRNKQAIIMPSSKLIVNVLRVMQKEGYVGEFEYIDDGRWGKILVQLMGRINKCGAITPRYSLTYREMISLPDYIRRYLPSKEIGVIIVSTPKGVMTHKEAARQRTGGIVLGYVY.

It belongs to the universal ribosomal protein uS8 family. As to quaternary structure, part of the 30S ribosomal subunit.

Its function is as follows. One of the primary rRNA binding proteins, it binds directly to 16S rRNA central domain where it helps coordinate assembly of the platform of the 30S subunit. The sequence is that of Small ribosomal subunit protein uS8 from Metallosphaera sedula (strain ATCC 51363 / DSM 5348 / JCM 9185 / NBRC 15509 / TH2).